We begin with the raw amino-acid sequence, 1025 residues long: Probable outer membrane protein PmpF (1025 aa).

Positions 1–20 (MTRRILPLSLVFIPLSCISA) are cleaved as a signal peptide. The tract at residues 654–681 (NSTETQTANNSIQEQKNTSETFDSNSTT) is disordered. Polar residues predominate over residues 659 to 681 (QTANNSIQEQKNTSETFDSNSTT). The Autotransporter domain occupies 748-1025 (LLPDDSWFAL…YMNAGGALVF (278 aa)).

Belongs to the PMP outer membrane protein family.

The protein localises to the secreted. Its subcellular location is the cell wall. It localises to the cell outer membrane. The protein is Probable outer membrane protein PmpF (pmpF) of Chlamydia muridarum (strain MoPn / Nigg).